Consider the following 181-residue polypeptide: Probable calcium-binding protein CML43 (181 aa).

EF-hand domains lie at 24 to 59, 107 to 142, and 145 to 180; these read LNAL…LGLD, SPES…LGLP, and GEIE…VVVP. Positions 37, 39, 41, 48, 120, 122, 124, 131, 158, 160, 162, 164, and 169 each coordinate Ca(2+).

Expressed specifically in roots.

Its function is as follows. Calcium-binding protein that may mediate calcium-dependent signal during plant defense response. The sequence is that of Probable calcium-binding protein CML43 (CML43) from Arabidopsis thaliana (Mouse-ear cress).